The primary structure comprises 121 residues: Small ribosomal subunit protein uS13 (121 aa).

The segment at 91-121 (HRKGLPVRGQRTRTNARTRKGKKKTVAGKKK) is disordered.

The protein belongs to the universal ribosomal protein uS13 family. Part of the 30S ribosomal subunit. Forms a loose heterodimer with protein S19. Forms two bridges to the 50S subunit in the 70S ribosome.

Functionally, located at the top of the head of the 30S subunit, it contacts several helices of the 16S rRNA. In the 70S ribosome it contacts the 23S rRNA (bridge B1a) and protein L5 of the 50S subunit (bridge B1b), connecting the 2 subunits; these bridges are implicated in subunit movement. Contacts the tRNAs in the A and P-sites. The polypeptide is Small ribosomal subunit protein uS13 (Treponema denticola (strain ATCC 35405 / DSM 14222 / CIP 103919 / JCM 8153 / KCTC 15104)).